A 762-amino-acid chain; its full sequence is Primary amine oxidase, lung isozyme (762 aa).

The N-terminal stretch at 1-16 (MFIFIFLSLWTLLVMG) is a signal peptide. The disordered stretch occupies residues 23–54 (GSEEGVGKQCHPSLPPRCPSRSPSDQPWTHPD). An N-linked (GlcNAc...) asparagine glycan is attached at Asn136. A disulfide bridge connects residues Cys197 and Cys198. The O-linked (GalNAc...) threonine glycan is linked to Thr211. 2 N-linked (GlcNAc...) asparagine glycosylation sites follow: Asn231 and Asn293. Substrate is bound at residue 383–393 (YMDACFGMGKF). Asp385 functions as the Proton acceptor in the catalytic mechanism. A disulfide bridge connects residues Cys403 and Cys429. Residue 467 to 472 (LLNYDY) coordinates substrate. The active-site Schiff-base intermediate with substrate; via topaquinone is Tyr470. Position 470 is a 2',4',5'-topaquinone (Tyr470). Residues His519 and His521 each contribute to the Cu cation site. Ca(2+)-binding residues include Asp528, Leu529, Asp530, and Glu571. Residue 577 to 584 (PLGGGSPR) coordinates heparin. N-linked (GlcNAc...) asparagine glycosylation is present at Asn617. The Ca(2+) site is built by Phe662 and Asn664. Asn665 is a glycosylation site (N-linked (GlcNAc...) asparagine). Residues Glu666, Asp672, and Leu673 each contribute to the Ca(2+) site. His683 is a Cu cation binding site. Cysteines 733 and 740 form a disulfide.

The protein belongs to the copper/topaquinone oxidase family. As to quaternary structure, homodimer; disulfide-linked. Cu cation serves as cofactor. It depends on Ca(2+) as a cofactor. Requires L-topaquinone as cofactor. Post-translationally, topaquinone (TPQ) is generated by copper-dependent autoxidation of a specific tyrosyl residue. In terms of tissue distribution, expressed in lung, spleen, heart and kidney.

It is found in the secreted. Its subcellular location is the extracellular space. The catalysed reaction is a primary methyl amine + O2 + H2O = an aldehyde + H2O2 + NH4(+). In Bos taurus (Bovine), this protein is Primary amine oxidase, lung isozyme.